The chain runs to 229 residues: Orotidine 5'-phosphate decarboxylase (229 aa).

Residues Asp-10, Lys-32, 59 to 68, Thr-119, Arg-180, Gln-189, Gly-209, and Arg-210 contribute to the substrate site; that span reads DLKFHDIPNT. Lys-61 (proton donor) is an active-site residue.

This sequence belongs to the OMP decarboxylase family. Type 1 subfamily. In terms of assembly, homodimer.

The enzyme catalyses orotidine 5'-phosphate + H(+) = UMP + CO2. It functions in the pathway pyrimidine metabolism; UMP biosynthesis via de novo pathway; UMP from orotate: step 2/2. Its function is as follows. Catalyzes the decarboxylation of orotidine 5'-monophosphate (OMP) to uridine 5'-monophosphate (UMP). This is Orotidine 5'-phosphate decarboxylase from Legionella pneumophila (strain Lens).